Reading from the N-terminus, the 71-residue chain is uncharacterized protein (71 aa).

A signal peptide spans 1 to 19; it reads MFLFPSLLSSFCITLRSIS.

This is an uncharacterized protein from Pasteurella multocida (strain Pm70).